We begin with the raw amino-acid sequence, 330 residues long: MVFSSIQAYLDSSNWQQAPPSNYNHDGTGASANGGHVLRPQLQPQQQPQQQPHPNGSGGGGGGGGGSIRAGSMVDRARQANVALPEAALKCPRCESTNTKFCYFNNYSLTQPRHFCKTCRRYWTRGGALRNVPVGGGCRRNRRTKSNSNNNNNSTATSNNTSFSSGNASTISTILSSHYGGNQESILSQILSPARLMNPTYNHLGDLTSNTKTDNNMSLLNYGGLSQDLRSIHMGASGGSLMSCVDEWRSASYHQQSSMGGGNLEDSSNPNPSANGFYSFESPRITSASISSALASQFSSVKVEDNPYKWVNVNGNCSSWNDLSAFGSSR.

Residues 14 to 25 (NWQQAPPSNYNH) show a composition bias toward polar residues. The segment at 14–70 (NWQQAPPSNYNHDGTGASANGGHVLRPQLQPQQQPQQQPHPNGSGGGGGGGGGSIRA) is disordered. Over residues 40 to 55 (PQLQPQQQPQQQPHPN) the composition is skewed to low complexity. The span at 56 to 68 (GSGGGGGGGGGSI) shows a compositional bias: gly residues. The segment at 89-143 (LKCPRCESTNTKFCYFNNYSLTQPRHFCKTCRRYWTRGGALRNVPVGGGCRRNRR) adopts a Dof-type zinc-finger fold. The Zn(2+) site is built by Cys91, Cys94, Cys116, and Cys119. Disordered regions lie at residues 133-165 (PVGG…SFSS) and 255-276 (QQSS…SANG). A compositionally biased stretch (low complexity) spans 146 to 165 (SNSNNNNNSTATSNNTSFSS). Over residues 265–276 (EDSSNPNPSANG) the composition is skewed to polar residues.

In terms of tissue distribution, specific to the vascular tissues. The PEAR proteins (e.g. DOF2.4, DOF5.1, DOF3.2, DOF1.1, DOF5.6 and DOF5.3) form a short-range concentration gradient that peaks at protophloem sieve elements (PSE).

The protein localises to the nucleus. It localises to the symplast. In terms of biological role, transcription factor that binds specifically to a 5'-AA[AG]G-3' consensus core sequence. Probably involved in early processes for vascular development. The PEAR proteins (e.g. DOF2.4, DOF5.1, DOF3.2, DOF1.1, DOF5.6 and DOF5.3) activate gene expression that promotes radial growth of protophloem sieve elements. Triggers the transcription of HD-ZIP III genes, especially in the central domain of vascular tissue. The protein is Dof zinc finger protein DOF2.4 of Arabidopsis thaliana (Mouse-ear cress).